We begin with the raw amino-acid sequence, 188 residues long: HTH-type transcriptional repressor AcnR (188 aa).

An HTH tetR-type domain is found at 10–70 (VNSRQEILEG…ALAREDAARM (61 aa)). A DNA-binding region (H-T-H motif) is located at residues 33–52 (TVRRLEEATGKSRGAIFHHF). Residues 79–80 (LV), Arg130, and Asn134 each bind citrate. Glu181 lines the Mg(2+) pocket. Position 185 (Arg185) interacts with citrate.

Homodimer.

AcnR negatively controls the expression of the aconitase gene acn. This is HTH-type transcriptional repressor AcnR from Corynebacterium efficiens (strain DSM 44549 / YS-314 / AJ 12310 / JCM 11189 / NBRC 100395).